The sequence spans 431 residues: MNKLENPLRDDVAGPAPRHQTTQVMVGDVAVGGGAPIVVQSMTNTDTADVEGTIKQIAALARAGSEMVRITVDREEAAAAVPHIRDGIRKLGLTTPIIGDFHYIGHKLLAEYPACAEALDKYRINPGNVGFKNKRDTQFADIVEIAIKNNKAVRIGANWGSLDQELLTKLMDENAASANPRDVRAVTREAMVQSALLSAARAEEIGLPKNKMILSAKVSAVQDLIAVYQDLASRSDYAIHLGLTEAGMGSKGIVASSAALGILLQQGIGDTIRISLTPEPGGDRTREVQVGQELLQTMGFRTFVPLVAACPGCGRTTSTTFQELARSIQDFIRDEMPEWRSRYPGVENLNVAVMGCIVNGPGESKHANIGISLPGTGETPAAPVFVDGEKFRTLRGENIAADFKALVIDYIEQRYGATPKPGAAQMVPAAE.

A compositionally biased stretch (basic and acidic residues) spans 1-12 (MNKLENPLRDDV). A disordered region spans residues 1–20 (MNKLENPLRDDVAGPAPRHQ). [4Fe-4S] cluster is bound by residues Cys310, Cys313, Cys356, and Glu363.

This sequence belongs to the IspG family. [4Fe-4S] cluster is required as a cofactor.

The catalysed reaction is (2E)-4-hydroxy-3-methylbut-2-enyl diphosphate + oxidized [flavodoxin] + H2O + 2 H(+) = 2-C-methyl-D-erythritol 2,4-cyclic diphosphate + reduced [flavodoxin]. It participates in isoprenoid biosynthesis; isopentenyl diphosphate biosynthesis via DXP pathway; isopentenyl diphosphate from 1-deoxy-D-xylulose 5-phosphate: step 5/6. Converts 2C-methyl-D-erythritol 2,4-cyclodiphosphate (ME-2,4cPP) into 1-hydroxy-2-methyl-2-(E)-butenyl 4-diphosphate. In Rhodopseudomonas palustris (strain TIE-1), this protein is 4-hydroxy-3-methylbut-2-en-1-yl diphosphate synthase (flavodoxin).